Reading from the N-terminus, the 198-residue chain is Na(+)-translocating NADH-quinone reductase subunit E (198 aa).

Helical transmembrane passes span 11–31, 39–59, 77–97, 110–130, 140–160, and 176–196; these read SIFI…FLAV, FGLG…NNLV, FLNF…LEMV, GIFL…SFMV, IVYG…LAGI, and LGIT…FSGV.

This sequence belongs to the NqrDE/RnfAE family. As to quaternary structure, composed of six subunits; NqrA, NqrB, NqrC, NqrD, NqrE and NqrF.

It localises to the cell inner membrane. It carries out the reaction a ubiquinone + n Na(+)(in) + NADH + H(+) = a ubiquinol + n Na(+)(out) + NAD(+). Functionally, NQR complex catalyzes the reduction of ubiquinone-1 to ubiquinol by two successive reactions, coupled with the transport of Na(+) ions from the cytoplasm to the periplasm. NqrA to NqrE are probably involved in the second step, the conversion of ubisemiquinone to ubiquinol. This Vibrio campbellii (strain ATCC BAA-1116) protein is Na(+)-translocating NADH-quinone reductase subunit E.